The chain runs to 248 residues: 14-3-3 protein sigma (248 aa).

Residues Ser-5, Ser-74, and Ser-248 each carry the phosphoserine modification.

It belongs to the 14-3-3 family. Homodimer. Interacts with KRT17 and SAMSN1. Found in a complex with XPO7, EIF4A1, ARHGAP1, VPS26A, VPS29 and VPS35. Interacts with GAB2. Interacts with SRPK2. Interacts with COPS6. Interacts with COP1; this interaction leads to proteasomal degradation. Interacts with the 'Thr-369' phosphorylated form of DAPK2. Interacts with PI4KB. Interacts with SLITRK1. Interacts with LRRK2; this interaction is dependent on LRRK2 phosphorylation. Interacts with PKP3 (via N-terminus); the interaction maintains the cytoplasmic pool of PKP3, facilitates PKP3 exchange at desmosomes and restricts PKP3 localization to existing desmosome cell junctions. Interacts with LCP2. In terms of processing, ubiquitinated. Ubiquitination by RFFL induces proteasomal degradation and indirectly regulates p53/TP53 activation. In terms of tissue distribution, expressed in dorsal skin (at protein level). Expressed in the basal layer of skin epithelium and in outer root sheath of hair follicle.

Its subcellular location is the cytoplasm. It localises to the nucleus. The protein resides in the secreted. Its function is as follows. Adapter protein implicated in the regulation of a large spectrum of both general and specialized signaling pathways. Binds to a large number of partners, usually by recognition of a phosphoserine or phosphothreonine motif. Binding generally results in the modulation of the activity of the binding partner. Promotes cytosolic retention of GBP1 GTPase by binding to phosphorylated GBP1, thereby inhibiting the innate immune response. Also acts as a TP53/p53-regulated inhibitor of G2/M progression. When bound to KRT17, regulates protein synthesis and epithelial cell growth by stimulating Akt/mTOR pathway. Acts to maintain desmosome cell junction adhesion in epithelial cells via interacting with and sequestering PKP3 to the cytoplasm, thereby restricting its translocation to existing desmosome structures and therefore maintaining desmosome protein homeostasis. Also acts to facilitate PKP3 exchange at desmosome plaques, thereby maintaining keratinocyte intercellular adhesion. May also regulate MDM2 autoubiquitination and degradation and thereby activate p53/TP53. This is 14-3-3 protein sigma (Sfn) from Mus musculus (Mouse).